Consider the following 612-residue polypeptide: Lysophospholipase (612 aa).

The first 9 residues, 1–9, serve as a signal peptide directing secretion; it reads DITFAGVQR. The 548-residue stretch at 24–571 folds into the PLA2c domain; the sequence is SCPASRPTVR…DRYCWNGTVN (548 aa). N-linked (GlcNAc...) asparagine glycans are attached at residues asparagine 41, asparagine 81, asparagine 116, asparagine 150, asparagine 223, asparagine 267, asparagine 306, asparagine 335, asparagine 427, asparagine 440, asparagine 446, asparagine 477, asparagine 498, asparagine 526, asparagine 532, asparagine 567, and asparagine 571.

This sequence belongs to the lysophospholipase family. In terms of processing, N-glycosylated.

Its subcellular location is the secreted. The enzyme catalyses a 1-acyl-sn-glycero-3-phosphocholine + H2O = sn-glycerol 3-phosphocholine + a fatty acid + H(+). Catalyzes the release of fatty acids from lysophospholipids. The sequence is that of Lysophospholipase from Penicillium chrysogenum (Penicillium notatum).